The sequence spans 392 residues: Solute carrier family 35 member B1 (392 aa).

The segment at 1–40 (MSLTKKIKNEKSLKQEKQTDQLKSNLRNNNNNINNKSKPK) is disordered. Over residues 7-20 (IKNEKSLKQEKQTD) the composition is skewed to basic and acidic residues. Low complexity predominate over residues 25 to 35 (NLRNNNNNINN). The next 9 membrane-spanning stretches (helical) occupy residues 57–77 (ELFF…YGLV), 97–117 (AFLL…VSLV), 124–144 (NTPF…TFLS), 155–175 (TQVL…LLLF), 179–199 (YPFL…LFML), 215–235 (HLFG…MGPF), 247–267 (ATSM…IMAF), 285–305 (VIKL…FIFL), and 341–361 (LQWA…YISY). Residues 389-392 (KKSL) carry the Di-lysine motif motif.

Belongs to the nucleotide-sugar transporter family. SLC35B subfamily.

The protein localises to the endoplasmic reticulum membrane. Probable sugar transporter. This is Solute carrier family 35 member B1 (slc35b1) from Dictyostelium discoideum (Social amoeba).